The sequence spans 461 residues: MSRAHVLLATFPAQGHINPALQFAKRLANADIQVTFFTSVYAWRRMSRTAAGSNGLINFVSFSDGYDDGLQPGDDGKNYMSEMKSRGIKALSDTLAANNVDQKSSKITFVVYSHLFAWAAKVAREFHLRSALLWIEPATVLDIFYFYFNGYSDEIDAGSDAIHLPGGLPVLAQRDLPSFLLPSTHERFRSLMKEKLETLEGEEKPKVLVNSFDALEPDALKAIDKYEMIAIGPLIPSAFLDGKDPSDRSFGGDLFEKGSNDDDCLEWLSTNPRSSVVYVSFGSFVNTTKSQMEEIARGLLDCGRPFLWVVRVNEGEEVLISCMEELKRVGKIVSWCSQLEVLTHPSLGCFVTHCGWNSTLESISFGVPMVAFPQWFDQGTNAKLMEDVWRTGVRVRANEEGSVVDGDEIRRCIEEVMDGGEKSRKLRESAGKWKDLARKAMEEDGSSVNNLKVFLDEVVGI.

An N-terminal signal peptide occupies residues Met1 to Gly15. Catalysis depends on His16, which acts as the Proton acceptor. An an anthocyanidin-binding site is contributed by His16. Positions 338, 353, 356, 357, 358, 361, 377, and 378 each coordinate UDP-alpha-D-glucose.

The protein belongs to the UDP-glycosyltransferase family.

It catalyses the reaction an anthocyanidin 3-O-beta-D-glucoside + UDP-alpha-D-glucose = an anthocyanidin 3,5-di-O-beta-D-glucoside + UDP + 2 H(+). Its pathway is pigment biosynthesis; anthocyanin biosynthesis. In terms of biological role, catalyzes the glucosylation at the O-5 position of anthocyanidin 3-glucosides to form anthocyanidin 3,5-di-O-glucosides using UDP-glucose as sugar donor. Anthocyanidin 3,5-di-O-glucosides are molecules that are responsible for pigmentation. Also acts on anthocyanidin 3-O-(6-O-malonylglucoside). Much less active with hydroxycinnamoylglucose derivatives. No activity in the absence of the 3-O-glucoside group. The polypeptide is Anthocyanidin 3-O-glucoside 5-O-glucosyltransferase (HGT8) (Verbena hybrida (Garden vervain)).